Here is a 296-residue protein sequence, read N- to C-terminus: Probable porphobilinogen deaminase (296 aa).

C241 carries the post-translational modification S-(dipyrrolylmethanemethyl)cysteine.

This sequence belongs to the HMBS family. Dipyrromethane serves as cofactor.

The enzyme catalyses 4 porphobilinogen + H2O = hydroxymethylbilane + 4 NH4(+). Its pathway is porphyrin-containing compound metabolism; protoporphyrin-IX biosynthesis; coproporphyrinogen-III from 5-aminolevulinate: step 2/4. In terms of biological role, tetrapolymerization of the monopyrrole PBG into the hydroxymethylbilane pre-uroporphyrinogen in several discrete steps. This is Probable porphobilinogen deaminase from Pyrobaculum neutrophilum (strain DSM 2338 / JCM 9278 / NBRC 100436 / V24Sta) (Thermoproteus neutrophilus).